Reading from the N-terminus, the 1224-residue chain is Dynactin subunit 1 (1224 aa).

The segment covering 1–10 has biased composition (basic residues); that stretch reads MAQSRRHPHG. The segment at 1-30 is disordered; that stretch reads MAQSRRHPHGRASSAGPRMSTEASSKPLKV. One can recognise a CAP-Gly domain in the interval 49–91; sequence GATLXATGKWVGVILDEAKGKNDGTVQGRKYFTCEENHGIFVR. Disordered stretches follow at residues 100-217, 374-402, and 888-918; these read DGAD…RSQV, SASE…RQQR, and PHCH…PPAE. The span at 117 to 146 shows a compositional bias: basic residues; that stretch reads VPKRHSRXAAKGSKLRGAKPKKTTARRPKP. Low complexity predominate over residues 148–180; it reads RTPTSAPSSGTAGPSGSASASGGEMSSSEPSTP. The stretch at 205 to 540 forms a coiled coil; that stretch reads SPTKEEENLR…QEASAEKQQQ (336 aa). Positions 207–217 are enriched in basic and acidic residues; it reads TKEEENLRSQV. Coiled coils occupy residues 936-1042 and 1081-1117; these read LKLE…EGLR and KDSP…LELA. The interval 1203–1224 is disordered; it reads WCSSSRARASPPASACSPPRPS. Residues 1204 to 1224 show a composition bias toward low complexity; sequence CSSSRARASPPASACSPPRPS.

It belongs to the dynactin 150 kDa subunit family. In terms of assembly, monomer and homodimer. Subunit of dynactin, a multiprotein complex part of a tripartite complex with dynein and a adapter, such as BICDL1, BICD2 or HOOK3. The dynactin complex is built around ACTR1A/ACTB filament and consists of an actin-related filament composed of a shoulder domain, a pointed end and a barbed end. Its length is defined by its flexible shoulder domain. The soulder is composed of 2 DCTN1 subunits, 4 DCTN2 and 2 DCTN3. DCTN1/p150(glued) binds directly to microtubules and to cytoplasmic dynein. As to expression, ubiquitously expressed.

It is found in the cytoplasm. It localises to the cytoskeleton. The protein localises to the microtubule organizing center. Its subcellular location is the centrosome. The protein resides in the centriole. It is found in the spindle. It localises to the cell cortex. Its function is as follows. Part of the dynactin complex that activates the molecular motor dynein for ultra-processive transport along microtubules. Plays a key role in dynein-mediated retrograde transport of vesicles and organelles along microtubules by recruiting and tethering dynein to microtubules. Binds to both dynein and microtubules providing a link between specific cargos, microtubules and dynein. Essential for targeting dynein to microtubule plus ends, recruiting dynein to membranous cargos and enhancing dynein processivity (the ability to move along a microtubule for a long distance without falling off the track). Can also act as a brake to slow the dynein motor during motility along the microtubule. Can regulate microtubule stability by promoting microtubule formation, nucleation and polymerization and by inhibiting microtubule catastrophe in neurons. Inhibits microtubule catastrophe by binding both to microtubules and to tubulin, leading to enhanced microtubule stability along the axon. Plays a role in metaphase spindle orientation. Plays a role in centriole cohesion and subdistal appendage organization and function. Its recruitment to the centriole in a KIF3A-dependent manner is essential for the maintenance of centriole cohesion and the formation of subdistal appendage. Also required for microtubule anchoring at the mother centriole. Plays a role in primary cilia formation. This is Dynactin subunit 1 (DCTN1) from Gallus gallus (Chicken).